The chain runs to 187 residues: Nucleoside-triphosphatase THEP1 (187 aa).

Residues G9–T16 and L100–G107 contribute to the ATP site.

This sequence belongs to the THEP1 NTPase family.

It catalyses the reaction a ribonucleoside 5'-triphosphate + H2O = a ribonucleoside 5'-diphosphate + phosphate + H(+). Its function is as follows. Has nucleotide phosphatase activity towards ATP, GTP, CTP, TTP and UTP. May hydrolyze nucleoside diphosphates with lower efficiency. The polypeptide is Nucleoside-triphosphatase THEP1 (Hyperthermus butylicus (strain DSM 5456 / JCM 9403 / PLM1-5)).